We begin with the raw amino-acid sequence, 315 residues long: Cytochrome f (315 aa).

Positions 1–36 (MKQSLLSVLTKKSLRLLAALFLVVTSVFSLPQAAQA) are cleaved as a signal peptide. The heme site is built by F37, C57, C60, and H61. The helical transmembrane segment at 281–301 (IKWLMVFFSAIMISQTLLVLK) threads the bilayer.

It belongs to the cytochrome f family. In terms of assembly, the 4 large subunits of the cytochrome b6-f complex are cytochrome b6, subunit IV (17 kDa polypeptide, PetD), cytochrome f and the Rieske protein, while the 4 small subunits are PetG, PetL, PetM and PetN. The complex functions as a dimer. Requires heme as cofactor.

It is found in the cellular thylakoid membrane. In terms of biological role, component of the cytochrome b6-f complex, which mediates electron transfer between photosystem II (PSII) and photosystem I (PSI), cyclic electron flow around PSI, and state transitions. The chain is Cytochrome f from Acaryochloris marina (strain MBIC 11017).